Consider the following 481-residue polypeptide: N-succinylglutamate 5-semialdehyde dehydrogenase (481 aa).

206-211 (GSARTG) provides a ligand contact to NAD(+). Catalysis depends on residues E229 and C263.

This sequence belongs to the aldehyde dehydrogenase family. AstD subfamily.

It catalyses the reaction N-succinyl-L-glutamate 5-semialdehyde + NAD(+) + H2O = N-succinyl-L-glutamate + NADH + 2 H(+). Its pathway is amino-acid degradation; L-arginine degradation via AST pathway; L-glutamate and succinate from L-arginine: step 4/5. Its function is as follows. Catalyzes the NAD-dependent reduction of succinylglutamate semialdehyde into succinylglutamate. This is N-succinylglutamate 5-semialdehyde dehydrogenase from Sphingopyxis alaskensis (strain DSM 13593 / LMG 18877 / RB2256) (Sphingomonas alaskensis).